A 654-amino-acid chain; its full sequence is Chaperone protein HtpG (654 aa).

The segment at 1 to 344 (MTVENAPQRE…SDDLPLNVSR (344 aa)) is a; substrate-binding. Residues 345 to 556 (ELLQDSQVVR…EGGSPAYLER (212 aa)) are b. The segment at 557–654 (LLQQRGRGAG…AQTPASATAS (98 aa)) is c.

The protein belongs to the heat shock protein 90 family. As to quaternary structure, homodimer.

The protein resides in the cytoplasm. Molecular chaperone. Has ATPase activity. The protein is Chaperone protein HtpG of Myxococcus xanthus (strain DK1622).